The following is a 130-amino-acid chain: Small ribosomal subunit protein uS11c (130 aa).

This sequence belongs to the universal ribosomal protein uS11 family. In terms of assembly, part of the 30S ribosomal subunit.

Its subcellular location is the plastid. The protein localises to the chloroplast. This is Small ribosomal subunit protein uS11c from Porphyra purpurea (Red seaweed).